Consider the following 388-residue polypeptide: MNLHEYQGKQLFAEYGLPVSKGFAVDTPEEAAEACDKIGGSEWVVKAQVHAGGRGKAGGVKLVKSKEDAKAFAQQWLGKNLVTYQTDANGQPVSKILVESCTDIDKELYLGAVVDRSSRRIVFMASTEGGVDIEKVAHDTPEKILKATIDPLVGAQPYQGRELAFQLGLKGDQIKQFTHIFVGLAKLFQDYDLALLEVNPLVIKKDGNLHCLDAKINIDSNALYRQPKLRAMHDPSQDDAREAHAQKWELNYVALEGNIGCMVNGAGLAMGTMDIVNLHGGKPANFLDVGGGATKERVTEAFKIILSDSNVKAVLVNIFGGIVRCDMIAEGIIGAVKEVGVKVPVVVRLEGNNAELGAKVLAESGLNIIAATSLTDAAQQVVKAAEGK.

An ATP-grasp domain is found at 9–244; sequence KQLFAEYGLP…PSQDDAREAH (236 aa). ATP-binding positions include Lys-46, 53–55, Glu-99, Thr-102, and Glu-107; that span reads GRG. Positions 199 and 213 each coordinate Mg(2+). Substrate-binding positions include Asn-264 and 321–323; that span reads GIV.

Belongs to the succinate/malate CoA ligase beta subunit family. As to quaternary structure, heterotetramer of two alpha and two beta subunits. Requires Mg(2+) as cofactor.

It carries out the reaction succinate + ATP + CoA = succinyl-CoA + ADP + phosphate. It catalyses the reaction GTP + succinate + CoA = succinyl-CoA + GDP + phosphate. It functions in the pathway carbohydrate metabolism; tricarboxylic acid cycle; succinate from succinyl-CoA (ligase route): step 1/1. Its function is as follows. Succinyl-CoA synthetase functions in the citric acid cycle (TCA), coupling the hydrolysis of succinyl-CoA to the synthesis of either ATP or GTP and thus represents the only step of substrate-level phosphorylation in the TCA. The beta subunit provides nucleotide specificity of the enzyme and binds the substrate succinate, while the binding sites for coenzyme A and phosphate are found in the alpha subunit. The protein is Succinate--CoA ligase [ADP-forming] subunit beta of Pseudomonas aeruginosa (strain LESB58).